The chain runs to 949 residues: Protocadherin alpha-11 (949 aa).

The N-terminal stretch at 1–29 (MFGFQRRGLGTPRLQLWLLLLEFWEVGSG) is a signal peptide. 6 Cadherin domains span residues 30–133 (QLHY…PPVF), 157–242 (ASDA…DPDF), 243–349 (DKSE…SPEV), 350–454 (AVTS…APAF), 455–564 (AQPE…APAL), and 580–677 (VPRS…APKA). The Extracellular portion of the chain corresponds to 30-696 (QLHYSVSEEA…SPEAALVDVN (667 aa)). N-linked (GlcNAc...) asparagine glycans are attached at residues Asn265 and Asn304. Asn547 carries N-linked (GlcNAc...) asparagine glycosylation. The helical transmembrane segment at 697–717 (VYLIIAICVVSSLLVLTLLLY) threads the bilayer. The Cytoplasmic portion of the chain corresponds to 718-949 (TALWCSATPT…GNSTTDNSDQ (232 aa)). 2 PXXP repeats span residues 733 to 736 (PGKP) and 773 to 776 (PSLP). The 6 X 4 AA repeats of P-X-X-P stretch occupies residues 733–893 (PGKPTLVCSR…PDKFIIPGSP (161 aa)). Disordered regions lie at residues 753–807 (RRQR…DWRY), 826–858 (ILRA…PPVG), and 870–889 (YGPG…KFII). Positions 780–789 (NKEEEGERQE) are enriched in basic and acidic residues. 4 PXXP repeats span residues 795 to 798 (PGQP), 831 to 834 (PGGP), 872 to 875 (PGNP), and 890 to 893 (PGSP). The interval 900–949 (QEPANSQIDKSDFITFGKKEETKKKKKKKKGNKTQEKKEKGNSTTDNSDQ) is disordered. Residues 908–922 (DKSDFITFGKKEETK) show a composition bias toward basic and acidic residues.

The protein resides in the cell membrane. Its function is as follows. Potential calcium-dependent cell-adhesion protein. May be involved in the establishment and maintenance of specific neuronal connections in the brain. The polypeptide is Protocadherin alpha-11 (PCDHA11) (Pan troglodytes (Chimpanzee)).